Consider the following 264-residue polypeptide: Thiazole synthase (264 aa).

Lysine 98 acts as the Schiff-base intermediate with DXP in catalysis. 1-deoxy-D-xylulose 5-phosphate-binding positions include glycine 159, alanine 185–glycine 186, and alanine 207–serine 208.

The protein belongs to the ThiG family. As to quaternary structure, homotetramer. Forms heterodimers with either ThiH or ThiS.

It localises to the cytoplasm. It catalyses the reaction [ThiS sulfur-carrier protein]-C-terminal-Gly-aminoethanethioate + 2-iminoacetate + 1-deoxy-D-xylulose 5-phosphate = [ThiS sulfur-carrier protein]-C-terminal Gly-Gly + 2-[(2R,5Z)-2-carboxy-4-methylthiazol-5(2H)-ylidene]ethyl phosphate + 2 H2O + H(+). It functions in the pathway cofactor biosynthesis; thiamine diphosphate biosynthesis. In terms of biological role, catalyzes the rearrangement of 1-deoxy-D-xylulose 5-phosphate (DXP) to produce the thiazole phosphate moiety of thiamine. Sulfur is provided by the thiocarboxylate moiety of the carrier protein ThiS. In vitro, sulfur can be provided by H(2)S. The chain is Thiazole synthase from Streptomyces griseus subsp. griseus (strain JCM 4626 / CBS 651.72 / NBRC 13350 / KCC S-0626 / ISP 5235).